The primary structure comprises 360 residues: UDP-N-acetylglucosamine--N-acetylmuramyl-(pentapeptide) pyrophosphoryl-undecaprenol N-acetylglucosamine transferase (360 aa).

Residues Ser-198 and Gln-289 each contribute to the UDP-N-acetyl-alpha-D-glucosamine site.

The protein belongs to the glycosyltransferase 28 family. MurG subfamily.

The protein localises to the cell membrane. It catalyses the reaction Mur2Ac(oyl-L-Ala-gamma-D-Glu-L-Lys-D-Ala-D-Ala)-di-trans,octa-cis-undecaprenyl diphosphate + UDP-N-acetyl-alpha-D-glucosamine = beta-D-GlcNAc-(1-&gt;4)-Mur2Ac(oyl-L-Ala-gamma-D-Glu-L-Lys-D-Ala-D-Ala)-di-trans,octa-cis-undecaprenyl diphosphate + UDP + H(+). It functions in the pathway cell wall biogenesis; peptidoglycan biosynthesis. In terms of biological role, cell wall formation. Catalyzes the transfer of a GlcNAc subunit on undecaprenyl-pyrophosphoryl-MurNAc-pentapeptide (lipid intermediate I) to form undecaprenyl-pyrophosphoryl-MurNAc-(pentapeptide)GlcNAc (lipid intermediate II). In Streptococcus pyogenes serotype M4 (strain MGAS10750), this protein is UDP-N-acetylglucosamine--N-acetylmuramyl-(pentapeptide) pyrophosphoryl-undecaprenol N-acetylglucosamine transferase.